The primary structure comprises 498 residues: Ammonium transporter 1 member 1 (498 aa).

A run of 11 helical transmembrane segments spans residues L39–G59, V74–G94, F120–A140, Y148–W168, F192–I212, L236–F256, S274–F296, V307–V327, W331–A351, L360–F380, and V411–G431.

The protein belongs to the ammonia transporter channel (TC 1.A.11.2) family. In terms of tissue distribution, expressed in roots and shoots.

It localises to the membrane. In terms of biological role, ammonium transporter probably involved in ammonium uptake from the soil. This Oryza sativa subsp. japonica (Rice) protein is Ammonium transporter 1 member 1 (AMT1-1).